Here is a 271-residue protein sequence, read N- to C-terminus: MKI67 FHA domain-interacting nucleolar phosphoprotein (271 aa).

The interval 1-20 (MAEYSGPAKPTLALNPREDS) is disordered. An N-acetylalanine modification is found at Ala2. Residue Lys37 forms a Glycyl lysine isopeptide (Lys-Gly) (interchain with G-Cter in SUMO2) linkage. The RRM domain occupies 44–122 (GVVYLGHLPS…RLLSCKFMPR (79 aa)). Position 113 is an omega-N-methylarginine (Arg113). Residues Lys178 and Lys191 each participate in a glycyl lysine isopeptide (Lys-Gly) (interchain with G-Cter in SUMO2) cross-link. Thr213 and Thr217 each carry phosphothreonine. 2 positions are modified to omega-N-methylated arginine: Arg223 and Arg224. Ser226 bears the Phosphoserine mark. Residues 242-271 (PVSPVKEDTQKTPAPESSGKKRLRKRKSKQ) are disordered. Lys247 is covalently cross-linked (Glycyl lysine isopeptide (Lys-Gly) (interchain with G-Cter in SUMO1); alternate). A Glycyl lysine isopeptide (Lys-Gly) (interchain with G-Cter in SUMO2); alternate cross-link involves residue Lys247. The segment covering 261–271 (KKRLRKRKSKQ) has biased composition (basic residues).

As to quaternary structure, binds to the FHA domain of MKI67; this interaction is enhanced in mitosis. Phosphorylated.

Its subcellular location is the nucleus. The protein localises to the nucleolus. It localises to the chromosome. The chain is MKI67 FHA domain-interacting nucleolar phosphoprotein (Nifk) from Rattus norvegicus (Rat).